A 489-amino-acid polypeptide reads, in one-letter code: Rhamnulokinase (489 aa).

13–17 is a binding site for ATP; that stretch reads ASSGR. Cysteines 68 and 222 form a disulfide. Substrate contacts are provided by residues G83 and 236-238; that span reads HDT. D237 acts as the Proton acceptor in catalysis. T259 contacts ATP. Residue N296 participates in substrate binding. Q304 is a binding site for ATP. A disulfide bridge connects residues C353 and C370. Residue G402 coordinates ATP. C413 and C417 form a disulfide bridge.

Belongs to the rhamnulokinase family. Mg(2+) is required as a cofactor.

The enzyme catalyses L-rhamnulose + ATP = L-rhamnulose 1-phosphate + ADP + H(+). It participates in carbohydrate degradation; L-rhamnose degradation; glycerone phosphate from L-rhamnose: step 2/3. Involved in the catabolism of L-rhamnose (6-deoxy-L-mannose). Catalyzes the transfer of the gamma-phosphate group from ATP to the 1-hydroxyl group of L-rhamnulose to yield L-rhamnulose 1-phosphate. This Salmonella paratyphi A (strain AKU_12601) protein is Rhamnulokinase.